The chain runs to 667 residues: Probable export ATP-binding/permease protein MacB (667 aa).

The 239-residue stretch at 22-260 folds into the ABC transporter domain; sequence LRLAGVSRRF…PVEEVQPAAE (239 aa). 58–65 is an ATP binding site; that stretch reads GASGSGKS. 4 consecutive transmembrane segments (helical) span residues 292–312, 540–560, 601–621, and 630–650; these read LLTM…SAIG, LTLL…IGVM, IGGV…ALFV, and LGSI…FGFV.

It belongs to the ABC transporter superfamily. Macrolide exporter (TC 3.A.1.122) family. In terms of assembly, probably part of a tripartite efflux system, which is composed of an inner membrane transporter, a periplasmic membrane fusion protein, and an outer membrane component.

The protein localises to the cell inner membrane. Probably part of a tripartite efflux system. The sequence is that of Probable export ATP-binding/permease protein MacB from Pseudomonas entomophila (strain L48).